We begin with the raw amino-acid sequence, 353 residues long: uncharacterized protein (353 aa).

Residues 1 to 20 form the signal peptide; sequence MLMRSVCFILLAVLLFSLSA. Residue Cys-21 is the site of N-palmitoyl cysteine attachment. Cys-21 carries S-diacylglycerol cysteine lipidation.

The protein resides in the cell membrane. This is an uncharacterized protein from Bacillus subtilis (strain 168).